We begin with the raw amino-acid sequence, 133 residues long: UPF0225 protein BB3385 (133 aa).

It belongs to the UPF0225 family.

This chain is UPF0225 protein BB3385, found in Bordetella bronchiseptica (strain ATCC BAA-588 / NCTC 13252 / RB50) (Alcaligenes bronchisepticus).